The chain runs to 84 residues: Small ribosomal subunit protein bS20 (84 aa).

It belongs to the bacterial ribosomal protein bS20 family.

Functionally, binds directly to 16S ribosomal RNA. This Lactiplantibacillus plantarum (strain ATCC BAA-793 / NCIMB 8826 / WCFS1) (Lactobacillus plantarum) protein is Small ribosomal subunit protein bS20.